Here is a 204-residue protein sequence, read N- to C-terminus: Pyrrolidone-carboxylate peptidase (204 aa).

Catalysis depends on residues E80, C142, and H165.

It belongs to the peptidase C15 family. Homotetramer.

It is found in the cytoplasm. It catalyses the reaction Release of an N-terminal pyroglutamyl group from a polypeptide, the second amino acid generally not being Pro.. In terms of biological role, removes 5-oxoproline from various penultimate amino acid residues except L-proline. This is Pyrrolidone-carboxylate peptidase from Lysinibacillus sphaericus (strain C3-41).